Consider the following 102-residue polypeptide: Small ribosomal subunit protein uS10 (102 aa).

The protein belongs to the universal ribosomal protein uS10 family. As to quaternary structure, part of the 30S ribosomal subunit.

Involved in the binding of tRNA to the ribosomes. The polypeptide is Small ribosomal subunit protein uS10 (Methanothrix thermoacetophila (strain DSM 6194 / JCM 14653 / NBRC 101360 / PT) (Methanosaeta thermophila)).